A 63-amino-acid polypeptide reads, in one-letter code: Large ribosomal subunit protein uL29 (63 aa).

It belongs to the universal ribosomal protein uL29 family.

This Christiangramia forsetii (strain DSM 17595 / CGMCC 1.15422 / KT0803) (Gramella forsetii) protein is Large ribosomal subunit protein uL29.